Reading from the N-terminus, the 322-residue chain is Stage V sporulation protein K (322 aa).

99-106 (GNPGTGKT) provides a ligand contact to ATP.

This sequence belongs to the CbxX/CfxQ family.

This Bacillus subtilis (strain 168) protein is Stage V sporulation protein K (spoVK).